The following is a 454-amino-acid chain: Ig mu chain C region (454 aa).

A CH1 region spans residues 1–105 (SPSSPTVFPL…NKDLRVPIPV (105 aa)). Cysteine 27 and cysteine 88 form a disulfide bridge. Asparagine 45, asparagine 112, asparagine 192, asparagine 210, asparagine 238, asparagine 257, and asparagine 280 each carry an N-linked (GlcNAc...) asparagine glycan. Residues 106 to 218 (VTEMNPNVSV…KNVSSTCAAS (113 aa)) form a CH2 region. Cysteine 135 and cysteine 198 are oxidised to a cystine. Residues 219–324 (PSTDIQAFPI…QKKFISKPRE (106 aa)) are CH3. 2 disulfide bridges follow: cysteine 245/cysteine 304 and cysteine 352/cysteine 414. Positions 325 to 454 (MNKTPPAVYQ…IMSDAGGTCY (130 aa)) are CH4. N-linked (GlcNAc...) asparagine glycosylation occurs at asparagine 441.

In Mesocricetus auratus (Golden hamster), this protein is Ig mu chain C region.